The following is a 502-amino-acid chain: Probable cytochrome P450 514A4 (502 aa).

Residues 4 to 24 (IFTIILTITILVLSLILKDLL) form a helical membrane-spanning segment. Cys448 is a binding site for heme.

It belongs to the cytochrome P450 family. It depends on heme as a cofactor.

The protein resides in the membrane. This is Probable cytochrome P450 514A4 (cyp514A4) from Dictyostelium discoideum (Social amoeba).